Reading from the N-terminus, the 339-residue chain is Adenosine deaminase (339 aa).

Residues His-15 and His-17 each coordinate Zn(2+). Substrate is bound by residues His-17, Asp-19, and Gly-172. Zn(2+) is bound at residue His-199. The active-site Proton donor is the Glu-202. Asp-279 contributes to the Zn(2+) binding site.

It belongs to the metallo-dependent hydrolases superfamily. Adenosine and AMP deaminases family. Adenosine deaminase subfamily. Zn(2+) serves as cofactor.

It catalyses the reaction adenosine + H2O + H(+) = inosine + NH4(+). It carries out the reaction 2'-deoxyadenosine + H2O + H(+) = 2'-deoxyinosine + NH4(+). In terms of biological role, catalyzes the hydrolytic deamination of adenosine and 2-deoxyadenosine. This chain is Adenosine deaminase, found in Lacticaseibacillus paracasei (strain ATCC 334 / BCRC 17002 / CCUG 31169 / CIP 107868 / KCTC 3260 / NRRL B-441) (Lactobacillus paracasei).